Here is a 384-residue protein sequence, read N- to C-terminus: F-box only protein 5-B (384 aa).

2 disordered regions span residues 1 to 20 (MMCGFTSNPSPKKLLSKSSA) and 79 to 106 (DEENSSLQDSGYSSILQNDSPCQDETDS). Positions 9 to 19 (PSPKKLLSKSS) are enriched in low complexity. Residues 83-99 (SSLQDSGYSSILQNDSP) show a composition bias toward polar residues. The region spanning 191-238 (AELFHRDFKHLLTKILRHLNAMDLINVIGVSTTWRKILQKDNWAYNTY) is the F-box domain. The ZBR-type zinc-finger motif lies at 311 to 359 (SLKACVDCGSPAKYDSYLHRAICTRESCKLDFCTLCSCKYHSSKSCLIS). 8 residues coordinate Zn(2+): Cys-315, Cys-318, Cys-333, Cys-338, Cys-343, Cys-346, His-351, and Cys-356.

As to quaternary structure, part of a SCF (SKP1-cullin-F-box) protein ligase complex. Interacts with btrc. Interacts with skp1. Interacts with cdc20. Interacts with pin1; stabilizes fbxo5 by preventing its association with btrc in an isomerization-dependent pathway; this interaction is present during G2 phase and prevents fbxo5 degradation. Interacts with plk1. Post-translationally, proteolysed; proteolysis is induced by both cyclin B-cdk1 and cyclin A-cdk1/2 complex through probable phosphorylation. Proteolysis is inhibited by pin1 during G2.

It is found in the nucleus. Its subcellular location is the cytoplasm. The protein localises to the cytoskeleton. The protein resides in the spindle. It localises to the microtubule organizing center. It is found in the centrosome. The protein operates within protein modification; protein ubiquitination. Functionally, regulates progression through early mitosis by inhibiting the anaphase promoting complex/cyclosome (APC). Binds to the APC activators cdc20 to prevent APC activation. Can also bind directly to the APC to inhibit substrate-binding. Required to arrest unfertilized eggs at metaphase of meiosis II, by preventing their release from metaphase of meiosis II, through inhibition of APC-dependent cyclin B destruction leading to stabilization of cyclin B-cdk1 complex activity. In Xenopus laevis (African clawed frog), this protein is F-box only protein 5-B (fbxo5-b).